The chain runs to 176 residues: Ribosome maturation factor RimM (176 aa).

Positions 96-176 (PEDEFYWRDL…QILVDWDPDF (81 aa)) constitute a PRC barrel domain.

It belongs to the RimM family. In terms of assembly, binds ribosomal protein uS19.

It is found in the cytoplasm. Functionally, an accessory protein needed during the final step in the assembly of 30S ribosomal subunit, possibly for assembly of the head region. Essential for efficient processing of 16S rRNA. May be needed both before and after RbfA during the maturation of 16S rRNA. It has affinity for free ribosomal 30S subunits but not for 70S ribosomes. This is Ribosome maturation factor RimM from Shewanella woodyi (strain ATCC 51908 / MS32).